Reading from the N-terminus, the 207-residue chain is Serotonin N-acetyltransferase (207 aa).

The interval 1–28 (MSTQSTHPLKPEAPRLPPGIPESPSCQR) is disordered. At Thr31 the chain carries Phosphothreonine; by PKA. The N-acetyltransferase domain occupies 35-194 (SEFRCLTPED…SLTFMELHCS (160 aa)). Substrate is bound at residue Leu124. Residues 124–126 (LAV) and 132–137 (QQGRGP) contribute to the acetyl-CoA site. Residue Met159 coordinates substrate. Residue 168–170 (YER) coordinates acetyl-CoA. Phosphoserine is present on Ser205.

The protein belongs to the acetyltransferase family. AANAT subfamily. Monomer. Interacts with several 14-3-3 proteins, including YWHAB, YWHAE, YWHAG and YWHAZ, preferentially when phosphorylated at Thr-31. Phosphorylation on Ser-205 also allows binding to YWHAZ, but with lower affinity. The interaction with YWHAZ considerably increases affinity for arylalkylamines and acetyl-CoA and protects the enzyme from dephosphorylation and proteasomal degradation. It may also prevent thiol-dependent inactivation. Post-translationally, cAMP-dependent phosphorylation on both N-terminal Thr-31 and C-terminal Ser-205 regulates AANAT activity by promoting interaction with 14-3-3 proteins. Highly expressed in pineal gland and at lower levels in the retina. Weak expression in several brain regions and in the pituitary gland.

Its subcellular location is the cytoplasm. The enzyme catalyses a 2-arylethylamine + acetyl-CoA = an N-acetyl-2-arylethylamine + CoA + H(+). The protein operates within aromatic compound metabolism; melatonin biosynthesis; melatonin from serotonin: step 1/2. In terms of biological role, controls the night/day rhythm of melatonin production in the pineal gland. Catalyzes the N-acetylation of serotonin into N-acetylserotonin, the penultimate step in the synthesis of melatonin. The sequence is that of Serotonin N-acetyltransferase (AANAT) from Homo sapiens (Human).